The sequence spans 265 residues: Shikimate dehydrogenase (NADP(+)) (265 aa).

Shikimate-binding positions include 14–16 and threonine 61; that span reads SLS. Lysine 65 functions as the Proton acceptor in the catalytic mechanism. Residues asparagine 85 and aspartate 100 each coordinate shikimate. Residues 123–127, 146–151, and alanine 209 contribute to the NADP(+) site; these read GAGGA and NRTESK. Position 211 (tyrosine 211) interacts with shikimate. An NADP(+)-binding site is contributed by glycine 232.

It belongs to the shikimate dehydrogenase family. As to quaternary structure, homodimer.

The catalysed reaction is shikimate + NADP(+) = 3-dehydroshikimate + NADPH + H(+). It functions in the pathway metabolic intermediate biosynthesis; chorismate biosynthesis; chorismate from D-erythrose 4-phosphate and phosphoenolpyruvate: step 4/7. Functionally, involved in the biosynthesis of the chorismate, which leads to the biosynthesis of aromatic amino acids. Catalyzes the reversible NADPH linked reduction of 3-dehydroshikimate (DHSA) to yield shikimate (SA). The sequence is that of Shikimate dehydrogenase (NADP(+)) from Haloarcula marismortui (strain ATCC 43049 / DSM 3752 / JCM 8966 / VKM B-1809) (Halobacterium marismortui).